We begin with the raw amino-acid sequence, 23 residues long: Alpha-conotoxin-like RgIB (23 aa).

2 disulfide bridges follow: Cys5–Cys11 and Cys6–Cys19. The tract at residues 7–9 (KNP) is lacks the Ser-Xaa-Pro motif that is crucial for potent interaction with nAChR.

In terms of tissue distribution, expressed by venom duct.

It is found in the secreted. Functionally, alpha-conotoxins act on postsynaptic membranes, they bind to the nicotinic acetylcholine receptors (nAChR) and thus inhibit them. Is a specific blocker of the alpha-3-beta-4/CHRNA3-CHRNB4 image nAChR and may also block alpha-3-beta-4-alpha-5 (CHRNA3-CHRNB4-CHRNA5) channels. Has possibly a distinct nAChR binding mode from other alpha-conotoxins, due to a different three residue motif (lacks the Ser-Xaa-Pro motif). In vivo, causes hyperactivity and behavioral disorders in mice following intracranial injection. In Conus regius (Crown cone), this protein is Alpha-conotoxin-like RgIB.